Consider the following 529-residue polypeptide: Ribonuclease Y (529 aa).

Residues 4 to 24 form a helical membrane-spanning segment; it reads GLIYISLEVIVACLISALAMY. The region spanning 216–297 is the KH domain; sequence FTNRIALPCS…NRIEEVYHRV (82 aa). The HD domain occupies 342 to 435; sequence ALQHSKEVAL…VCAADALSAG (94 aa).

It belongs to the RNase Y family.

It is found in the cell membrane. Endoribonuclease that initiates mRNA decay. This chain is Ribonuclease Y, found in Helicobacter acinonychis (strain Sheeba).